A 448-amino-acid polypeptide reads, in one-letter code: Trigger factor (448 aa).

Positions 160-245 constitute a PPIase FKBP-type domain; that stretch reads GDMLLMKVES…IQEIREEKLP (86 aa).

Belongs to the FKBP-type PPIase family. Tig subfamily.

It localises to the cytoplasm. It catalyses the reaction [protein]-peptidylproline (omega=180) = [protein]-peptidylproline (omega=0). Functionally, involved in protein export. Acts as a chaperone by maintaining the newly synthesized protein in an open conformation. Functions as a peptidyl-prolyl cis-trans isomerase. The sequence is that of Trigger factor from Dehalococcoides mccartyi (strain ATCC BAA-2266 / KCTC 15142 / 195) (Dehalococcoides ethenogenes (strain 195)).